The chain runs to 109 residues: Glutaredoxin 4 (109 aa).

The Glutaredoxin domain maps to L4–Y106. K21 contacts glutathione. Residue C29 participates in [2Fe-2S] cluster binding. Glutathione is bound by residues R58, F70, and C83–D84.

The protein belongs to the glutaredoxin family. Monothiol subfamily. Homodimer.

Its subcellular location is the cytoplasm. Monothiol glutaredoxin involved in the biogenesis of iron-sulfur clusters. This Pasteurella multocida (strain Pm70) protein is Glutaredoxin 4 (grxD).